The chain runs to 348 residues: Keratocan (348 aa).

The first 26 residues, 1 to 26 (MSRLNLTMEVLLVAFVAVFLTSQVHS), serve as a signal peptide directing secretion. The LRRNT domain occupies 40-69 (ACPKECNCPPNFPNAVYCDNKGLKSIPVIP). 2 disulfide bridges follow: C41-C47 and C45-C57. LRR repeat units lie at residues 70–92 (PYTWYLYLQNNLIDVLSANALRN), 93–118 (ATQLKWINLNRNKITTEGLEVDALRA), 119–140 (MSNLVHLYMEDNLLSSIPSPLP), 141–163 (AKLEQLRLSRNKISKIPPGVFSG), 165–189 (GHLTLLDLQSNKLQDDAVTEVSLKG), 190–213 (LNNLIQINLAKNQLNSMPLGLPPT), 215–234 (TQIFLDGNNIEKIPAEYFKG), 235–260 (LPKVASLRLNRNKLANGGIPKNVFNL), 262–280 (SILDLQLSHNQLTEVPVIS), and 281–303 (SGLEHLHLDHNKIKSVNSSDICP). Residue N92 is glycosylated (N-linked (GlcNAc...) (keratan sulfate) asparagine). N-linked (GlcNAc...) (keratan sulfate) asparagine glycosylation is present at N259. N-linked (GlcNAc...) asparagine glycosylation occurs at N297. Residues C302 and C339 are joined by a disulfide bond.

This sequence belongs to the small leucine-rich proteoglycan (SLRP) family. SLRP class II subfamily. Glycosylated. Contains keratan sulfate chains. Expressed in eye, where it is found in the corneal epithelial layer and to a lesser extent in the stromal layer (at protein level).

The protein localises to the secreted. It localises to the extracellular space. Its subcellular location is the extracellular matrix. In terms of biological role, may be important in developing and maintaining corneal transparency and for the structure of the stromal matrix. This is Keratocan from Danio rerio (Zebrafish).